The chain runs to 790 residues: Nuclear cap-binding protein subunit 1 (790 aa).

The interval 1–26 (MSRRRHSDENDGGQPHKRRKTSDANE) is disordered. Positions 3 to 20 (RRRHSDENDGGQPHKRRK) match the Nuclear localization signal motif. Ser-7 bears the Phosphoserine; by RPS6KB1 mark. Phosphothreonine; by RPS6KB1 is present on Thr-21. Phosphoserine; by RPS6KB1 is present on Ser-22. An MIF4G domain is found at 28 to 240 (EDHLESLICK…CLWAQIQKLK (213 aa)). Ser-201 carries the post-translational modification Phosphoserine. Lys-204 is modified (N6-acetyllysine). Residues 643–713 (STIRKMNKHV…SEQKNLFLVI (71 aa)) adopt a coiled-coil conformation. Residue Lys-684 forms a Glycyl lysine isopeptide (Lys-Gly) (interchain with G-Cter in SUMO2) linkage. Lys-698 carries the post-translational modification N6-acetyllysine.

Belongs to the NCBP1 family. Component of the nuclear cap-binding complex (CBC), a heterodimer composed of NCBP1/CBP80 and NCBP2/CBP20 that interacts with m7GpppG-capped RNA. Found in a U snRNA export complex containing PHAX/RNUXA, NCBP1/CBP80, NCBP2/CBP20, RAN, XPO1 and m7G-capped RNA. Identified in a IGF2BP1-dependent mRNP granule complex containing untranslated mRNAs. Interacts with PHAX/RNUXA, SRRT/ARS2, EIF4G2, IGF2BP1, HNRNPF, HNRNPH1, KIAA0427/CTIF, PARN, DROSHA, UPF1 and ALYREF/THOC4. May interact with EIF4G1; the interaction is however controversial since it is reported by PubMed:11340157, PubMed:15059963 and PubMed:15361857, but is not observed by PubMed:19648179. The large PER complex involved in the repression of transcriptional termination is composed of at least PER2, CDK9, DDX5, DHX9, NCBP1/CBP80 and POLR2A. Component of an alternative nuclear cap-binding complex (CBC) composed of NCBP1/CBP80 and NCBP3. Interacts with METTL3. Interacts with ZFC3H1 in a RNase-insensitive manner. Interacts with MTREX. Interacts with TASOR. Interacts with DHX34; the interaction is RNA-dependent. Interacts with KPNA3. Post-translationally, dephosphorylated at Thr-21 by the PNUTS-PP1 complex during RNA polymerase II transcription pause-release.

The protein resides in the nucleus. It is found in the cytoplasm. Component of the cap-binding complex (CBC), which binds cotranscriptionally to the 5'-cap of pre-mRNAs and is involved in various processes such as pre-mRNA splicing, translation regulation, nonsense-mediated mRNA decay, RNA-mediated gene silencing (RNAi) by microRNAs (miRNAs) and mRNA export. The CBC complex is involved in mRNA export from the nucleus via its interaction with ALYREF/THOC4/ALY, leading to the recruitment of the mRNA export machinery to the 5'-end of mRNA and to mRNA export in a 5' to 3' direction through the nuclear pore. The CBC complex is also involved in mediating U snRNA and intronless mRNAs export from the nucleus. The CBC complex is essential for a pioneer round of mRNA translation, before steady state translation when the CBC complex is replaced by cytoplasmic cap-binding protein eIF4E. The pioneer round of mRNA translation mediated by the CBC complex plays a central role in nonsense-mediated mRNA decay (NMD), NMD only taking place in mRNAs bound to the CBC complex, but not on eIF4E-bound mRNAs. The CBC complex enhances NMD in mRNAs containing at least one exon-junction complex (EJC) via its interaction with UPF1, promoting the interaction between UPF1 and UPF2. The CBC complex is also involved in 'failsafe' NMD, which is independent of the EJC complex, while it does not participate in Staufen-mediated mRNA decay (SMD). During cell proliferation, the CBC complex is also involved in microRNAs (miRNAs) biogenesis via its interaction with SRRT/ARS2 and is required for miRNA-mediated RNA interference. The CBC complex also acts as a negative regulator of PARN, thereby acting as an inhibitor of mRNA deadenylation. In the CBC complex, NCBP1/CBP80 does not bind directly capped RNAs (m7GpppG-capped RNA) but is required to stabilize the movement of the N-terminal loop of NCBP2/CBP20 and lock the CBC into a high affinity cap-binding state with the cap structure. Associates with NCBP3 to form an alternative cap-binding complex (CBC) which plays a key role in mRNA export and is particularly important in cellular stress situations such as virus infections. The conventional CBC with NCBP2 binds both small nuclear RNA (snRNA) and messenger (mRNA) and is involved in their export from the nucleus whereas the alternative CBC with NCBP3 does not bind snRNA and associates only with mRNA thereby playing a role only in mRNA export. NCBP1/CBP80 is required for cell growth and viability. In Homo sapiens (Human), this protein is Nuclear cap-binding protein subunit 1 (NCBP1).